The sequence spans 481 residues: MDYISTRDASRTPARFSDILLGGLAPDGGLYLPATYPQLDDAQLSKWREVLANEGYAALAAEVISLFVDDIPVEDIKAITARAYTYPKFNSEDIVPVTELEDNIYLGHLSEGPTAAFKDMAMQLLGELFEYELRRRNETINILGATSGDTGSSAEYAMRGREGIRVFMLTPAGRMTPFQQAQMFGLDDPNIFNIALDGVFDDCQDVVKAVSADAEFKKDNRIGAVNSINWARLMAQVVYYVSSWIRTTTSNDQKVSFSVPTGNFGDICAGHIARQMGLPIDRLIVATNENDVLDEFFRTGDYRVRSSADTHETSSPSMDISRASNFERFIFDLLGRDATRVNDLFGTQVRQGGFSLADDANFEKAAAEYGFASGRSTHADRVATIADVHSRLDVLIDPHTADGVHVARQWRDEVNTPIIVLETALPVKFADTIVEAIGEAPQTPERFAAIMDAPFKVSDLPNDTDAVKQYIVDAIANTSVK.

At lysine 118 the chain carries N6-(pyridoxal phosphate)lysine.

The protein belongs to the threonine synthase family. In terms of assembly, monomer. Pyridoxal 5'-phosphate is required as a cofactor.

The enzyme catalyses O-phospho-L-homoserine + H2O = L-threonine + phosphate. It functions in the pathway amino-acid biosynthesis; L-threonine biosynthesis; L-threonine from L-aspartate: step 5/5. Catalyzes the gamma-elimination of phosphate from L-phosphohomoserine and the beta-addition of water to produce L-threonine. The protein is Threonine synthase (thrC) of Corynebacterium glutamicum (strain ATCC 13032 / DSM 20300 / JCM 1318 / BCRC 11384 / CCUG 27702 / LMG 3730 / NBRC 12168 / NCIMB 10025 / NRRL B-2784 / 534).